Reading from the N-terminus, the 117-residue chain is NADH-ubiquinone oxidoreductase chain 3 (117 aa).

3 helical membrane passes run 3-23 (LLLTILFITTILSLILAIVSF), 56-76 (FFLVAILFLLFDLEIALLLPL), and 85-105 (PMFTLLWASALLIMLTLGLIY).

The protein belongs to the complex I subunit 3 family.

The protein localises to the mitochondrion membrane. It catalyses the reaction a ubiquinone + NADH + 5 H(+)(in) = a ubiquinol + NAD(+) + 4 H(+)(out). Core subunit of the mitochondrial membrane respiratory chain NADH dehydrogenase (Complex I) that is believed to belong to the minimal assembly required for catalysis. Complex I functions in the transfer of electrons from NADH to the respiratory chain. The immediate electron acceptor for the enzyme is believed to be ubiquinone. In Tetraodon nigroviridis (Spotted green pufferfish), this protein is NADH-ubiquinone oxidoreductase chain 3 (MT-ND3).